A 262-amino-acid polypeptide reads, in one-letter code: T-cell surface glycoprotein YE1/48 (262 aa).

At 1–44 the chain is on the cytoplasmic side; that stretch reads MSEQEVTYSMVRFHKSAGLQKQVRPEETKGPREAGYRRCSFHWK. The chain crosses the membrane as a helical; Signal-anchor for type II membrane protein span at residues 45–66; it reads FIVIALGIFCFLLLVAVSVLAI. The Extracellular segment spans residues 67-262; sequence KIFQYDQQKN…CGKRLDKFPH (196 aa). 3 N-linked (GlcNAc...) asparagine glycosylation sites follow: asparagine 86, asparagine 103, and asparagine 123. A Cell attachment site motif is present at residues 137–139; sequence RGD. The C-type lectin domain occupies 138–257; sequence GDKVYWFCYG…VFICICGKRL (120 aa). Disulfide bonds link cysteine 145–cysteine 150, cysteine 163–cysteine 251, cysteine 167–cysteine 253, and cysteine 232–cysteine 245.

In terms of assembly, homodimer; disulfide-linked. In terms of tissue distribution, high, in T-lymphoma lines, very low in normal lymphocytes.

It is found in the membrane. Receptor on natural killer (NK) cells for H-2d alleles. Inhibits the activity of NK cells thus preventing cell lysis. The sequence is that of T-cell surface glycoprotein YE1/48 (Klra1) from Mus musculus (Mouse).